The sequence spans 745 residues: Aminopeptidase NAALADL1 (745 aa).

Over 1 to 6 (MHWAKI) the chain is Cytoplasmic. The chain crosses the membrane as a helical; Signal-anchor for type II membrane protein span at residues 7 to 28 (LGVGIGAAALLGLGIILGHFAI). Residues 29–745 (PKATEPLASS…AATLQPVTDL (717 aa)) lie on the Extracellular side of the membrane. Residues asparagine 128, asparagine 141, and asparagine 235 are each glycosylated (N-linked (GlcNAc...) asparagine). Ca(2+) is bound by residues threonine 263 and leucine 266. Asparagine 279, asparagine 304, and asparagine 350 each carry an N-linked (GlcNAc...) asparagine glycan. Residues cysteine 301 and cysteine 318 are joined by a disulfide bond. Residues histidine 373 and aspartate 383 each contribute to the Zn(2+) site. Residue glutamate 421 is the Proton donor/acceptor of the active site. Glutamate 422 provides a ligand contact to Zn(2+). The Ca(2+) site is built by glutamate 430 and glutamate 433. Aspartate 450 contributes to the Zn(2+) binding site. N-linked (GlcNAc...) asparagine glycans are attached at residues asparagine 456 and asparagine 497. Position 550 (histidine 550) interacts with Zn(2+). 2 N-linked (GlcNAc...) asparagine glycosylation sites follow: asparagine 593 and asparagine 620.

This sequence belongs to the peptidase M28 family. M28B subfamily. As to quaternary structure, homodimer. Requires Zn(2+) as cofactor. Post-translationally, N-glycosylated. In terms of tissue distribution, detected on apical villi on the brush border membrane of ileum enterocytes (at protein level). Mainly expressed in the distal small intestine.

The protein resides in the apical cell membrane. In terms of biological role, aminopeptidase with broad substrate specificity. Has lower activity with substrates that have Asp or Glu in the P2' position, or Pro in the P3' position. Lacks activity with substrates that have both Pro in the P3' position and Asp or Glu in the P2' position. Lacks carboxypeptidase activity. Lacks dipeptidyl-peptidase IV type activity. The chain is Aminopeptidase NAALADL1 (Naaladl1) from Rattus norvegicus (Rat).